The sequence spans 151 residues: Metallothiol transferase FosB (151 aa).

The 116-residue stretch at 4-119 (SINHVTYSVS…DGHKFELHTG (116 aa)) folds into the VOC domain. Positions 7, 66, and 115 each coordinate Mg(2+). Glutamate 115 acts as the Proton donor/acceptor in catalysis.

This sequence belongs to the fosfomycin resistance protein family. FosB subfamily. As to quaternary structure, homodimer. Mg(2+) serves as cofactor.

The protein localises to the cytoplasm. In terms of biological role, metallothiol transferase which confers resistance to fosfomycin by catalyzing the addition of a thiol cofactor to fosfomycin. L-cysteine is probably the physiological thiol donor. In Staphylococcus saprophyticus subsp. saprophyticus (strain ATCC 15305 / DSM 20229 / NCIMB 8711 / NCTC 7292 / S-41), this protein is Metallothiol transferase FosB.